Consider the following 351-residue polypeptide: Deoxyguanosinetriphosphate triphosphohydrolase-like protein (351 aa).

The 122-residue stretch at 75–196 folds into the HD domain; that stretch reads RLTHTLEVAE…VRVADIIAYL (122 aa).

Belongs to the dGTPase family. Type 2 subfamily.

This chain is Deoxyguanosinetriphosphate triphosphohydrolase-like protein, found in Desulfatibacillum aliphaticivorans.